Reading from the N-terminus, the 105-residue chain is Large ribosomal subunit protein uL24 (105 aa).

This sequence belongs to the universal ribosomal protein uL24 family. As to quaternary structure, part of the 50S ribosomal subunit.

Functionally, one of two assembly initiator proteins, it binds directly to the 5'-end of the 23S rRNA, where it nucleates assembly of the 50S subunit. One of the proteins that surrounds the polypeptide exit tunnel on the outside of the subunit. The chain is Large ribosomal subunit protein uL24 from Xylella fastidiosa (strain M12).